The chain runs to 329 residues: MSMSSYPRQRPRRLRSTVAMRRLVAQTSLEPRHLVLPMFVADGIDEPRPITSMPGVVQHTRDSLRRAAAAAVAAGVGGLMLFGVPRDQDKDGVGSAGIDPDGILNVALRDLAKDLGEATVLMADTCLDEFTDHGHCGVLDDRGRVDNDATVARYVELAVAQAESGAHVVGPSGMMDGQVAAIRDGLDAAGYIDVVILAYAAKFASAFYGPFREAVSSSLSGDRRTYQQEPGNAAEALREIELDLDEGADIVMVKPAMGYLDVVAAAADVSPVPVAAYQVSGEYAMIRAAAANNWIDERAAVLESLTGIRRAGADIVLTYWAVDAAGWLT.

Lys-202 functions as the Schiff-base intermediate with substrate in the catalytic mechanism. Positions 212 and 223 each coordinate 5-aminolevulinate. Glu-239 is a Mg(2+) binding site. Lys-254 serves as the catalytic Schiff-base intermediate with substrate. 5-aminolevulinate contacts are provided by Ser-280 and Tyr-319.

This sequence belongs to the ALAD family. As to quaternary structure, homooctamer.

The catalysed reaction is 2 5-aminolevulinate = porphobilinogen + 2 H2O + H(+). It functions in the pathway porphyrin-containing compound metabolism; protoporphyrin-IX biosynthesis; coproporphyrinogen-III from 5-aminolevulinate: step 1/4. In terms of biological role, catalyzes an early step in the biosynthesis of tetrapyrroles. Binds two molecules of 5-aminolevulinate per subunit, each at a distinct site, and catalyzes their condensation to form porphobilinogen. In Mycobacterium tuberculosis (strain CDC 1551 / Oshkosh), this protein is Delta-aminolevulinic acid dehydratase (hemB).